A 133-amino-acid polypeptide reads, in one-letter code: Cytochrome b5 (133 aa).

The Cytochrome b5 heme-binding domain maps to 4 to 86 (EKEYILDEIS…LKNYLVGNFK (83 aa)). 2 residues coordinate heme: H45 and H69. Residues 108 to 128 (SGTGIMLIVLMALFAIAYGYY) traverse the membrane as a helical segment.

The protein belongs to the cytochrome b5 family. Interacts with alternative squalene epoxidase PHATRDRAFT_45494.

It localises to the endoplasmic reticulum membrane. In terms of biological role, hemoprotein that functions as an electron carrier for membrane bound monooxygenases involved in sterol biosynthesis. This Phaeodactylum tricornutum (strain CCAP 1055/1) protein is Cytochrome b5.